A 445-amino-acid polypeptide reads, in one-letter code: Cyclic GMP-AMP synthase-like receptor 1 (445 aa).

Mg(2+) contacts are provided by Glu70, Asp72, and Asp186. 70–72 is an ATP binding site; the sequence is EYD. GTP-binding positions include Asp186 and 232–239; that span reads RTSFYEAE. Residues 236-239, Lys257, and 270-274 contribute to the ATP site; these read YEAE and SYHIK. The segment at 357 to 445 is disordered; that stretch reads LNDDNENSVH…KSKTTTPKPS (89 aa). A compositionally biased stretch (basic and acidic residues) spans 377-398; the sequence is QKMEKTSTESEQKKPTETKPNA. The span at 435–445 shows a compositional bias: low complexity; that stretch reads TKSKTTTPKPS.

It belongs to the mab-21 family. Mg(2+) is required as a cofactor. Requires Mn(2+) as cofactor.

The catalysed reaction is GTP + ATP = 3',2'-cGAMP + 2 diphosphate. It catalyses the reaction GTP + ATP = pppA(2'-5')pG + diphosphate. It carries out the reaction pppA(2'-5')pG = 3',2'-cGAMP + diphosphate. The enzyme activity is specifically activated by double-stranded RNA (dsRNA). Functionally, nucleotidyltransferase that catalyzes the formation of cyclic GMP-AMP (3',2'-cGAMP) from ATP and GTP and plays a key role in innate immunity. Synthesizes 3',2'-cGAMP in a two-step reaction through production of the linear intermediate pppA(2'-5')pG. Acts as a key sensor of double-stranded RNA (dsRNA), the presence of dsRNA in the cytoplasm being a danger signal that triggers the immune responses. Directly binds dsRNA, activating the nucleotidyltransferase activity, leading to synthesis of 3',2'-cGAMP, a second messenger that binds to and activates Sting, thereby triggering the antiviral immune response via activation of the NF-kappa-B transcription factor Rel (Relish). In Drosophila erecta (Fruit fly), this protein is Cyclic GMP-AMP synthase-like receptor 1.